The sequence spans 161 residues: Cyclic pyranopterin monophosphate synthase (161 aa).

Substrate is bound by residues 75-77 and 115-116; these read MCH and ME. The active site involves Asp130.

It belongs to the MoaC family. As to quaternary structure, homohexamer; trimer of dimers.

The enzyme catalyses (8S)-3',8-cyclo-7,8-dihydroguanosine 5'-triphosphate = cyclic pyranopterin phosphate + diphosphate. Its pathway is cofactor biosynthesis; molybdopterin biosynthesis. Catalyzes the conversion of (8S)-3',8-cyclo-7,8-dihydroguanosine 5'-triphosphate to cyclic pyranopterin monophosphate (cPMP). This Bacillus cereus (strain 03BB102) protein is Cyclic pyranopterin monophosphate synthase.